The following is a 123-amino-acid chain: uncharacterized protein (123 aa).

The segment at 17 to 74 is disordered; the sequence is FQKKKKTGSQTRRTLKPQPQQLQQNLPKGHETTGHTYERVLQQQGSQERSPGLMSEDS. Thr-30 is modified (phosphothreonine). The segment covering 32-43 has biased composition (low complexity); that stretch reads KPQPQQLQQNLP. A compositionally biased stretch (basic and acidic residues) spans 44 to 54; sequence KGHETTGHTYE. Position 62 is a phosphoserine (Ser-62).

This is an uncharacterized protein from Homo sapiens (Human).